A 138-amino-acid polypeptide reads, in one-letter code: Acidic phospholipase A2 inhibitor chain HPD-1I (138 aa).

Residues 1 to 16 (MRTLWIVAVCLIGVEG) form the signal peptide. Intrachain disulfides connect Cys42–Cys131, Cys44–Cys60, Cys59–Cys111, Cys65–Cys138, Cys66–Cys104, Cys73–Cys97, and Cys91–Cys102.

Heterodimer of an acidic and a basic chain; non-covalently linked. The basic chain is toxic and has phospholipase A2 activity (chain HDP-1P (AC Q1RP79) or HDP-2P (AC Q1RP78)) and the acidic chain is non-toxic and functions as its inhibitor (chain HPD-1I). Expressed by the venom gland.

The protein resides in the secreted. In terms of biological role, heterodimer: slightly affects neuromuscular transmission acting presynaptically. It has a low catalytic activity, a low anticoagulant activity and weakly inhibits ADP-induced platelet aggregation. Functionally, monomer: has no activity (neurotoxic, catalytic, anticoagulant and a ADP-induced platelet aggregation), but inhibits phospholipase A2. The chain is Acidic phospholipase A2 inhibitor chain HPD-1I from Vipera nikolskii (Nikolsky's adder).